The sequence spans 258 residues: Transcriptional repressor AccR (258 aa).

One can recognise an HTH deoR-type domain in the interval 6–61 (TQDRQAKIVELLRDEQFLAIGRLTEHFQISVATARRDLSELHEAGLLRRTHGGAVS). The segment at residues 23 to 42 (LAIGRLTEHFQISVATARRD) is a DNA-binding region (H-T-H motif).

Represses opine catabolism and conjugal transfer of the nopaline Ti plasmid pTiC58. In Agrobacterium fabrum (strain C58 / ATCC 33970) (Agrobacterium tumefaciens (strain C58)), this protein is Transcriptional repressor AccR (accR).